Here is a 296-residue protein sequence, read N- to C-terminus: GTP cyclohydrolase FolE2 (296 aa).

Belongs to the GTP cyclohydrolase IV family.

It catalyses the reaction GTP + H2O = 7,8-dihydroneopterin 3'-triphosphate + formate + H(+). Its pathway is cofactor biosynthesis; 7,8-dihydroneopterin triphosphate biosynthesis; 7,8-dihydroneopterin triphosphate from GTP: step 1/1. Converts GTP to 7,8-dihydroneopterin triphosphate. This is GTP cyclohydrolase FolE2 from Delftia acidovorans (strain DSM 14801 / SPH-1).